Here is a 455-residue protein sequence, read N- to C-terminus: Bifunctional protein GlmU (455 aa).

Residues 1-225 (MNIVILAAGM…EWETLGVNSK (225 aa)) are pyrophosphorylase. Residues 6 to 9 (LAAG), K20, Q71, 76 to 77 (GT), 98 to 100 (YGD), G135, E150, N165, and N223 each bind UDP-N-acetyl-alpha-D-glucosamine. D100 contacts Mg(2+). Mg(2+) is bound at residue N223. Residues 226–246 (VQLAELERIHQRNLAQQLLED) are linker. The interval 247–455 (GVTLIDPARI…QRPVKQKKEG (209 aa)) is N-acetyltransferase. UDP-N-acetyl-alpha-D-glucosamine is bound by residues R329 and K347. Catalysis depends on H359, which acts as the Proton acceptor. UDP-N-acetyl-alpha-D-glucosamine is bound by residues Y362 and N373. Acetyl-CoA is bound by residues A376, 382-383 (NY), S401, A419, and R436.

This sequence in the N-terminal section; belongs to the N-acetylglucosamine-1-phosphate uridyltransferase family. It in the C-terminal section; belongs to the transferase hexapeptide repeat family. Homotrimer. It depends on Mg(2+) as a cofactor.

The protein resides in the cytoplasm. The enzyme catalyses alpha-D-glucosamine 1-phosphate + acetyl-CoA = N-acetyl-alpha-D-glucosamine 1-phosphate + CoA + H(+). The catalysed reaction is N-acetyl-alpha-D-glucosamine 1-phosphate + UTP + H(+) = UDP-N-acetyl-alpha-D-glucosamine + diphosphate. It participates in nucleotide-sugar biosynthesis; UDP-N-acetyl-alpha-D-glucosamine biosynthesis; N-acetyl-alpha-D-glucosamine 1-phosphate from alpha-D-glucosamine 6-phosphate (route II): step 2/2. The protein operates within nucleotide-sugar biosynthesis; UDP-N-acetyl-alpha-D-glucosamine biosynthesis; UDP-N-acetyl-alpha-D-glucosamine from N-acetyl-alpha-D-glucosamine 1-phosphate: step 1/1. It functions in the pathway bacterial outer membrane biogenesis; LPS lipid A biosynthesis. In terms of biological role, catalyzes the last two sequential reactions in the de novo biosynthetic pathway for UDP-N-acetylglucosamine (UDP-GlcNAc). The C-terminal domain catalyzes the transfer of acetyl group from acetyl coenzyme A to glucosamine-1-phosphate (GlcN-1-P) to produce N-acetylglucosamine-1-phosphate (GlcNAc-1-P), which is converted into UDP-GlcNAc by the transfer of uridine 5-monophosphate (from uridine 5-triphosphate), a reaction catalyzed by the N-terminal domain. This chain is Bifunctional protein GlmU, found in Ralstonia pickettii (strain 12J).